We begin with the raw amino-acid sequence, 100 residues long: Urease subunit gamma (100 aa).

It belongs to the urease gamma subunit family. Heterotrimer of UreA (gamma), UreB (beta) and UreC (alpha) subunits. Three heterotrimers associate to form the active enzyme.

The protein resides in the cytoplasm. The enzyme catalyses urea + 2 H2O + H(+) = hydrogencarbonate + 2 NH4(+). The protein operates within nitrogen metabolism; urea degradation; CO(2) and NH(3) from urea (urease route): step 1/1. The sequence is that of Urease subunit gamma from Pseudomonas fluorescens (strain Pf0-1).